Here is a 203-residue protein sequence, read N- to C-terminus: 3-isopropylmalate dehydratase small subunit (203 aa).

Belongs to the LeuD family. LeuD type 1 subfamily. Heterodimer of LeuC and LeuD.

It catalyses the reaction (2R,3S)-3-isopropylmalate = (2S)-2-isopropylmalate. It participates in amino-acid biosynthesis; L-leucine biosynthesis; L-leucine from 3-methyl-2-oxobutanoate: step 2/4. In terms of biological role, catalyzes the isomerization between 2-isopropylmalate and 3-isopropylmalate, via the formation of 2-isopropylmaleate. The sequence is that of 3-isopropylmalate dehydratase small subunit from Rhodospirillum centenum (strain ATCC 51521 / SW).